A 240-amino-acid chain; its full sequence is Probable transcriptional regulatory protein jhp_0149 (240 aa).

The protein belongs to the TACO1 family.

The protein resides in the cytoplasm. The protein is Probable transcriptional regulatory protein jhp_0149 of Helicobacter pylori (strain J99 / ATCC 700824) (Campylobacter pylori J99).